Consider the following 366-residue polypeptide: Tyrosyl-DNA phosphodiesterase 2 (366 aa).

Methionine 1 carries the N-acetylmethionine modification. Over residues 1 to 22 (MASGSSSDAAESAEPAAAPAAA) the composition is skewed to low complexity. The disordered stretch occupies residues 1–30 (MASGSSSDAAESAEPAAAPAAAETEEDQVK). Lysine 30 participates in a covalent cross-link: Glycyl lysine isopeptide (Lys-Gly) (interchain with G-Cter in SUMO2). Threonine 95 bears the Phosphothreonine; by ACVR1B mark. The interval 126–130 (NIDGL) is interaction with 5' end of substrate DNA. 2 residues coordinate Mg(2+): aspartate 128 and glutamate 158. The interval 232–237 (HLESTR) is interaction with 5' end of substrate DNA. The active-site Proton donor/acceptor is the aspartate 268. The tract at residues 270–272 (NLR) is interaction with 5' end of substrate DNA.

This sequence belongs to the CCR4/nocturin family. In terms of assembly, interacts with TRAF2, TRAF3, TRAF5, TRAF6, TNFRSF8/CD30, TNFRSF5/CD40, TNFRSF1B/TNF-R75, ETS1, ETS2, FLI1, SMAD3 and ACVR1B/ALK4. Requires Mg(2+) as cofactor. Mn(2+) serves as cofactor. Ubiquitinated by TRAF6.

It localises to the nucleus. The protein localises to the PML body. Its subcellular location is the nucleolus. The protein resides in the cytoplasm. Functionally, DNA repair enzyme that can remove a variety of covalent adducts from DNA through hydrolysis of a 5'-phosphodiester bond, giving rise to DNA with a free 5' phosphate. Catalyzes the hydrolysis of dead-end complexes between DNA and the topoisomerase 2 (TOP2) active site tyrosine residue. The 5'-tyrosyl DNA phosphodiesterase activity can enable the repair of TOP2-induced DNA double-strand breaks/DSBs without the need for nuclease activity, creating a 'clean' DSB with 5'-phosphate termini that are ready for ligation. Thereby, protects the transcription of many genes involved in neurological development and maintenance from the abortive activity of TOP2. Hydrolyzes 5'-phosphoglycolates on protruding 5' ends on DSBs due to DNA damage by radiation and free radicals. Has preference for single-stranded DNA or duplex DNA with a 4 base pair overhang as substrate. Also has 3'-tyrosyl DNA phosphodiesterase activity, but less efficiently and much slower than TDP1. Constitutes the major if not only 5'-tyrosyl-DNA phosphodiesterase in cells. Also acts as an adapter by participating in the specific activation of MAP3K7/TAK1 in response to TGF-beta: associates with components of the TGF-beta receptor-TRAF6-TAK1 signaling module and promotes their ubiquitination dependent complex formation. Involved in non-canonical TGF-beta induced signaling routes. May also act as a negative regulator of ETS1 and may inhibit NF-kappa-B activation. Acts as a regulator of ribosome biogenesis following stress. The sequence is that of Tyrosyl-DNA phosphodiesterase 2 (Tdp2) from Rattus norvegicus (Rat).